Here is an 83-residue protein sequence, read N- to C-terminus: NAD(P)H-quinone oxidoreductase subunit L (83 aa).

A run of 2 helical transmembrane segments spans residues 15–35 (LMVLAAYVLLGGLYLIVVPLL) and 53–73 (LSAYGMVFLFFPGLILFAPFL).

Belongs to the complex I NdhL subunit family. As to quaternary structure, NDH-1 can be composed of about 15 different subunits; different subcomplexes with different compositions have been identified which probably have different functions.

Its subcellular location is the cellular thylakoid membrane. The catalysed reaction is a plastoquinone + NADH + (n+1) H(+)(in) = a plastoquinol + NAD(+) + n H(+)(out). It carries out the reaction a plastoquinone + NADPH + (n+1) H(+)(in) = a plastoquinol + NADP(+) + n H(+)(out). NDH-1 shuttles electrons from an unknown electron donor, via FMN and iron-sulfur (Fe-S) centers, to quinones in the respiratory and/or the photosynthetic chain. The immediate electron acceptor for the enzyme in this species is believed to be plastoquinone. Couples the redox reaction to proton translocation, and thus conserves the redox energy in a proton gradient. Cyanobacterial NDH-1 also plays a role in inorganic carbon-concentration. This chain is NAD(P)H-quinone oxidoreductase subunit L, found in Prochlorococcus marinus (strain MIT 9303).